We begin with the raw amino-acid sequence, 533 residues long: Probable galacturonosyltransferase 13 (533 aa).

Residues 1–40 (MQLHISPSMRSITISSSNEFIDLMKIKVAARHISYRTLFH) are Cytoplasmic-facing. The chain crosses the membrane as a helical; Signal-anchor for type II membrane protein span at residues 41 to 61 (TILILAFLLPFVFILTAVVTL). At 62-533 (EGVNKCSSFD…DFIKNCHILE (472 aa)) the chain is on the lumenal side. Residues Asn-306, Asn-396, Asn-445, and Asn-520 are each glycosylated (N-linked (GlcNAc...) asparagine).

It belongs to the glycosyltransferase 8 family. In terms of tissue distribution, expressed in roots, inflorescences, siliques, leaves and stems. Accumulates in pollen grains.

It localises to the golgi apparatus membrane. It participates in glycan metabolism; pectin biosynthesis. Its function is as follows. May be involved in pectin and/or xylans biosynthesis in cell walls. Together with GAUT14, required for pollen tube growth, possibly through the regulation of pectin biosynthesis and repartition in the pollen tube wall. The sequence is that of Probable galacturonosyltransferase 13 from Arabidopsis thaliana (Mouse-ear cress).